A 448-amino-acid polypeptide reads, in one-letter code: Protein giant (448 aa).

Disordered regions lie at residues 23–47 (MHHH…LPVQ), 83–134 (QQHQ…ASPT), 238–259 (VEAT…RPFK), and 298–363 (IRSS…TSSS). Residues 30–47 (HHQQQPLHHLPHSQLPVQ) are compositionally biased toward low complexity. Basic and acidic residues predominate over residues 100–112 (DLSRRCDSVETPR). Low complexity predominate over residues 115 to 134 (PSPYQTSYSYGSGSPSASPT). Residues 298–310 (IRSSNGGSRTVTN) are compositionally biased toward polar residues. Low complexity predominate over residues 318–333 (SRSGSVNEGSSSNNNS). The 64-residue stretch at 384–447 (DAAYYERRRK…AAFTSAKVTT (64 aa)) folds into the bZIP domain. Residues 390-406 (RRRKNNAAAKKSRDRRR) are basic motif. The leucine-zipper stretch occupies residues 407–414 (IKEDEIAI).

It belongs to the bZIP family. As to quaternary structure, homodimer or heterodimer. Post-translationally, phosphorylated at multiple sites.

Its subcellular location is the nucleus. Represses the expression of both the krueppel and knirps segmentation gap genes. Binds, in vitro, to the krueppel regulatory elements CD1 and CD2. It is required in the early embryo for the development of portions of the head and abdomen. This Drosophila melanogaster (Fruit fly) protein is Protein giant (gt).